Here is a 137-residue protein sequence, read N- to C-terminus: Transcription antitermination protein NusB (137 aa).

The protein belongs to the NusB family.

Functionally, involved in transcription antitermination. Required for transcription of ribosomal RNA (rRNA) genes. Binds specifically to the boxA antiterminator sequence of the ribosomal RNA (rrn) operons. The sequence is that of Transcription antitermination protein NusB from Clavibacter michiganensis subsp. michiganensis (strain NCPPB 382).